Consider the following 360-residue polypeptide: Pyrimidine monooxygenase RutA (360 aa).

FMN contacts are provided by residues 49-50 (IK), N115, E124, 140-141 (RY), and S190.

This sequence belongs to the NtaA/SnaA/DszA monooxygenase family. RutA subfamily.

It carries out the reaction uracil + FMNH2 + NADH + O2 = (Z)-3-ureidoacrylate + FMN + NAD(+) + H2O + H(+). The catalysed reaction is thymine + FMNH2 + NADH + O2 = (Z)-2-methylureidoacrylate + FMN + NAD(+) + H2O + H(+). Functionally, catalyzes the pyrimidine ring opening between N-3 and C-4 by an unusual flavin hydroperoxide-catalyzed mechanism, adding oxygen atoms in the process to yield ureidoacrylate peracid, that immediately reacts with FMN forming ureidoacrylate and FMN-N(5)-oxide. The FMN-N(5)-oxide reacts spontaneously with NADH to produce FMN. Requires the flavin reductase RutF to regenerate FMN in vivo. The protein is Pyrimidine monooxygenase RutA of Bradyrhizobium sp. (strain BTAi1 / ATCC BAA-1182).